A 702-amino-acid polypeptide reads, in one-letter code: Elongation factor G (702 aa).

In terms of domain architecture, tr-type G spans 8–290 (ERYRNIGISA…AVIDYLPSPV (283 aa)). GTP is bound by residues 17 to 24 (AHIDAGKT), 88 to 92 (DTPGH), and 142 to 145 (NKMD).

It belongs to the TRAFAC class translation factor GTPase superfamily. Classic translation factor GTPase family. EF-G/EF-2 subfamily.

It localises to the cytoplasm. Catalyzes the GTP-dependent ribosomal translocation step during translation elongation. During this step, the ribosome changes from the pre-translocational (PRE) to the post-translocational (POST) state as the newly formed A-site-bound peptidyl-tRNA and P-site-bound deacylated tRNA move to the P and E sites, respectively. Catalyzes the coordinated movement of the two tRNA molecules, the mRNA and conformational changes in the ribosome. The sequence is that of Elongation factor G from Acidovorax ebreus (strain TPSY) (Diaphorobacter sp. (strain TPSY)).